A 294-amino-acid chain; its full sequence is Cytidine deaminase (294 aa).

CMP/dCMP-type deaminase domains are found at residues 48–168 (DEDA…FGPK) and 186–294 (LTGD…VLLA). 89 to 91 (NME) is a binding site for substrate. H102 serves as a coordination point for Zn(2+). The Proton donor role is filled by E104. C129 and C132 together coordinate Zn(2+).

Belongs to the cytidine and deoxycytidylate deaminase family. In terms of assembly, homodimer. It depends on Zn(2+) as a cofactor.

It catalyses the reaction cytidine + H2O + H(+) = uridine + NH4(+). The catalysed reaction is 2'-deoxycytidine + H2O + H(+) = 2'-deoxyuridine + NH4(+). Functionally, this enzyme scavenges exogenous and endogenous cytidine and 2'-deoxycytidine for UMP synthesis. The sequence is that of Cytidine deaminase from Escherichia coli O157:H7.